A 243-amino-acid chain; its full sequence is Probable transcriptional regulatory protein BB_0025 (243 aa).

This sequence belongs to the TACO1 family.

It localises to the cytoplasm. The chain is Probable transcriptional regulatory protein BB_0025 from Borreliella burgdorferi (strain ATCC 35210 / DSM 4680 / CIP 102532 / B31) (Borrelia burgdorferi).